We begin with the raw amino-acid sequence, 650 residues long: DNA mismatch repair protein MutL (650 aa).

Residues 374 to 420 (SSLPDTQRSQRQPEKAASGQRSSVDAGLSQGSSAHRASQTGLGQSGN) form a disordered region. The span at 392–420 (GQRSSVDAGLSQGSSAHRASQTGLGQSGN) shows a compositional bias: polar residues.

The protein belongs to the DNA mismatch repair MutL/HexB family.

Its function is as follows. This protein is involved in the repair of mismatches in DNA. It is required for dam-dependent methyl-directed DNA mismatch repair. May act as a 'molecular matchmaker', a protein that promotes the formation of a stable complex between two or more DNA-binding proteins in an ATP-dependent manner without itself being part of a final effector complex. The polypeptide is DNA mismatch repair protein MutL (Shewanella amazonensis (strain ATCC BAA-1098 / SB2B)).